We begin with the raw amino-acid sequence, 466 residues long: Alpha-galacturonidase (466 aa).

Residue 11 to 78 (VKIAYIGGGS…GKWNYETANT (68 aa)) participates in NAD(+) binding. Asn-157 contacts substrate. Cys-179 is a binding site for Mn(2+). The Proton donor role is filled by His-180. Residue His-216 participates in Mn(2+) binding.

This sequence belongs to the glycosyl hydrolase 4 family. In terms of assembly, homotetramer. NAD(+) serves as cofactor. Mn(2+) is required as a cofactor.

It carries out the reaction [(1-&gt;4)-alpha-D-galacturonosyl](n) + H2O = alpha-D-galacturonate + [(1-&gt;4)-alpha-D-galacturonosyl](n-1). In terms of biological role, alpha-galacturonidase able to catalyze the hydrolysis of the chromogenic substrate p-nitrophenyl-alpha-D-galacturonic acid (pNPalphaGalUA). It is probable that alpha-1,4-di-galacturonate (GalUA(2)) is the naturally occurring substrate. This Lachnoclostridium phytofermentans (strain ATCC 700394 / DSM 18823 / ISDg) (Clostridium phytofermentans) protein is Alpha-galacturonidase.